We begin with the raw amino-acid sequence, 158 residues long: Peroxidase (158 aa).

P2 is a binding site for substrate. H32 is a heme b binding site. T33 is a Ca(2+) binding site. A disulfide bond links C39 and C64. N-linked (GlcNAc...) asparagine glycosylation occurs at N48. Positions 78, 81, and 86 each coordinate Ca(2+).

This sequence belongs to the peroxidase family. Classical plant (class III) peroxidase subfamily. Requires Ca(2+) as cofactor. It depends on heme b as a cofactor.

It catalyses the reaction 2 a phenolic donor + H2O2 = 2 a phenolic radical donor + 2 H2O. Removal of H(2)O(2), oxidation of toxic reductants, biosynthesis and degradation of lignin, suberization, auxin catabolism, response to environmental stresses such as wounding, pathogen attack and oxidative stress. These functions might be dependent on each isozyme/isoform in each plant tissue. The chain is Peroxidase from Lupinus polyphyllus (Large-leaved lupine).